We begin with the raw amino-acid sequence, 78 residues long: Small ribosomal subunit protein bS18 (78 aa).

This sequence belongs to the bacterial ribosomal protein bS18 family. Part of the 30S ribosomal subunit. Forms a tight heterodimer with protein bS6.

Functionally, binds as a heterodimer with protein bS6 to the central domain of the 16S rRNA, where it helps stabilize the platform of the 30S subunit. The chain is Small ribosomal subunit protein bS18 from Kineococcus radiotolerans (strain ATCC BAA-149 / DSM 14245 / SRS30216).